A 338-amino-acid chain; its full sequence is MLVLINTIQEQASEAIKQATDIVALEQIRVDFLGKKGKLTELLKGLANLSAEEKPKVGQLVNQAKQGISALIETKMIELKEKQLLAKLAAEQIDVTLPGRNHSTGSLHPVTQVKHRINDYFSRLGFDIVEGPEIETEFYNFEALNIPGHHPARAMHDTFYFGDGRLLRTHTSPVQIRTMEQRKPPFRLIAPGRVYRCDSDVTHTPMFHQVEGLLIDKQATLAGLKGLLQDFFAYFFGRELALRFRPSYFPFTEPSAEVDIECTQCNGKGCRSCKFTGWLEVLGCGMVHPNVLIAVNIDPNEYHGWAFGMGMDRLAMLYYGIDDLRMLFENDLTFLRQF.

E253 is a binding site for Mg(2+).

Belongs to the class-II aminoacyl-tRNA synthetase family. Phe-tRNA synthetase alpha subunit type 1 subfamily. As to quaternary structure, tetramer of two alpha and two beta subunits. The cofactor is Mg(2+).

Its subcellular location is the cytoplasm. It catalyses the reaction tRNA(Phe) + L-phenylalanine + ATP = L-phenylalanyl-tRNA(Phe) + AMP + diphosphate + H(+). This chain is Phenylalanine--tRNA ligase alpha subunit, found in Legionella pneumophila (strain Paris).